Here is a 339-residue protein sequence, read N- to C-terminus: UDP-N-acetylenolpyruvoylglucosamine reductase (339 aa).

Positions 19–189 (VDVQARLFAE…LRVRFKLSRV (171 aa)) constitute an FAD-binding PCMH-type domain. Arginine 166 is a catalytic residue. Serine 239 functions as the Proton donor in the catalytic mechanism. Glutamate 335 is a catalytic residue.

It belongs to the MurB family. Requires FAD as cofactor.

Its subcellular location is the cytoplasm. It catalyses the reaction UDP-N-acetyl-alpha-D-muramate + NADP(+) = UDP-N-acetyl-3-O-(1-carboxyvinyl)-alpha-D-glucosamine + NADPH + H(+). Its pathway is cell wall biogenesis; peptidoglycan biosynthesis. In terms of biological role, cell wall formation. The polypeptide is UDP-N-acetylenolpyruvoylglucosamine reductase (Pseudomonas savastanoi pv. phaseolicola (strain 1448A / Race 6) (Pseudomonas syringae pv. phaseolicola (strain 1448A / Race 6))).